The following is a 363-amino-acid chain: tRNA N6-adenosine threonylcarbamoyltransferase (363 aa).

The Fe cation site is built by His-127 and His-131. Substrate-binding positions include Leu-150–Gly-154, Asp-183, Gly-196, and Asn-290. Asp-318 contributes to the Fe cation binding site.

Belongs to the KAE1 / TsaD family. Requires Fe(2+) as cofactor.

The protein resides in the cytoplasm. The catalysed reaction is L-threonylcarbamoyladenylate + adenosine(37) in tRNA = N(6)-L-threonylcarbamoyladenosine(37) in tRNA + AMP + H(+). Functionally, required for the formation of a threonylcarbamoyl group on adenosine at position 37 (t(6)A37) in tRNAs that read codons beginning with adenine. Is involved in the transfer of the threonylcarbamoyl moiety of threonylcarbamoyl-AMP (TC-AMP) to the N6 group of A37, together with TsaE and TsaB. TsaD likely plays a direct catalytic role in this reaction. The chain is tRNA N6-adenosine threonylcarbamoyltransferase from Zymomonas mobilis subsp. mobilis (strain ATCC 31821 / ZM4 / CP4).